The chain runs to 180 residues: Flavin prenyltransferase UbiX (180 aa).

Residues 9–11, S33, 84–87, and R119 each bind FMN; these read GAS and SITT. Residues Y149 and R165 each contribute to the dimethylallyl phosphate site.

This sequence belongs to the UbiX/PAD1 family.

The catalysed reaction is dimethylallyl phosphate + FMNH2 = prenylated FMNH2 + phosphate. Functionally, flavin prenyltransferase that catalyzes the synthesis of the prenylated FMN cofactor (prenyl-FMN) for 4-hydroxy-3-polyprenylbenzoic acid decarboxylase UbiD. The prenyltransferase is metal-independent and links a dimethylallyl moiety from dimethylallyl monophosphate (DMAP) to the flavin N5 and C6 atoms of FMN. In Thermoplasma acidophilum (strain ATCC 25905 / DSM 1728 / JCM 9062 / NBRC 15155 / AMRC-C165), this protein is Flavin prenyltransferase UbiX.